Reading from the N-terminus, the 225-residue chain is Transcriptional regulatory protein CssR (225 aa).

The 114-residue stretch at 4-117 (TIYLVEDEDN…ELIIRVQKLL (114 aa)) folds into the Response regulatory domain. Position 52 is a 4-aspartylphosphate (D52). The ompR/PhoB-type DNA-binding region spans 129–224 (KNEIAVSSYR…IYGFGYRMMS (96 aa)).

Phosphorylated by CssS.

The protein resides in the cytoplasm. In terms of biological role, member of the two-component regulatory system CssS/CssR required to control the cellular response to secretion stress. This is Transcriptional regulatory protein CssR (cssR) from Bacillus subtilis (strain 168).